Here is a 373-residue protein sequence, read N- to C-terminus: Cobalt-precorrin-5B C(1)-methyltransferase (373 aa).

This sequence belongs to the CbiD family.

The catalysed reaction is Co-precorrin-5B + S-adenosyl-L-methionine = Co-precorrin-6A + S-adenosyl-L-homocysteine. The protein operates within cofactor biosynthesis; adenosylcobalamin biosynthesis; cob(II)yrinate a,c-diamide from sirohydrochlorin (anaerobic route): step 6/10. In terms of biological role, catalyzes the methylation of C-1 in cobalt-precorrin-5B to form cobalt-precorrin-6A. This chain is Cobalt-precorrin-5B C(1)-methyltransferase, found in Listeria welshimeri serovar 6b (strain ATCC 35897 / DSM 20650 / CCUG 15529 / CIP 8149 / NCTC 11857 / SLCC 5334 / V8).